A 176-amino-acid chain; its full sequence is Translation initiation factor IF-3 (176 aa).

This sequence belongs to the IF-3 family. As to quaternary structure, monomer.

It localises to the cytoplasm. IF-3 binds to the 30S ribosomal subunit and shifts the equilibrium between 70S ribosomes and their 50S and 30S subunits in favor of the free subunits, thus enhancing the availability of 30S subunits on which protein synthesis initiation begins. The protein is Translation initiation factor IF-3 of Rippkaea orientalis (strain PCC 8801 / RF-1) (Cyanothece sp. (strain PCC 8801)).